A 504-amino-acid chain; its full sequence is Crh-like protein CRH12 (504 aa).

The first 18 residues, 1–18 (MYKQILTFLILFLRYILS), serve as a signal peptide directing secretion. One can recognise a GH16 domain in the interval 19-270 (EFPDDPYEDD…YSKALTYSYG (252 aa)). The N-linked (GlcNAc...) asparagine glycan is linked to N34. A disulfide bridge connects residues C43 and C51. The active-site Nucleophile is E138. E143 (proton donor) is an active-site residue. E143 contacts chitin. A glycan (N-linked (GlcNAc...) asparagine) is linked at N161. Residues K221, W225, and T234 each contribute to the chitin site. The interval 304-404 (KPTPKQETDD…LDISTQLPPL (101 aa)) is disordered. Residues 316-329 (VLTSSKSQRVATTI) show a composition bias toward polar residues. Over residues 356–378 (WETEQDETGTDDTENSDNEEEES) the composition is skewed to acidic residues. 3 N-linked (GlcNAc...) asparagine glycosylation sites follow: N407, N416, and N425. G479 carries GPI-anchor amidated glycine lipidation. Residues 480 to 504 (VSSILATSFSSVVIAEILVIVVLLL) constitute a propeptide, removed in mature form.

It belongs to the glycosyl hydrolase 16 family. CRH1 subfamily. The GPI-anchor is attached to the protein in the endoplasmic reticulum and serves to target the protein to the cell surface. There, the glucosamine-inositol phospholipid moiety is cleaved off and the GPI-modified mannoprotein is covalently attached via its lipidless GPI glycan remnant to the 1,6-beta-glucan of the outer cell wall layer.

It is found in the secreted. The protein resides in the cell wall. Its subcellular location is the membrane. It carries out the reaction Random endo-hydrolysis of N-acetyl-beta-D-glucosaminide (1-&gt;4)-beta-linkages in chitin and chitodextrins.. In terms of biological role, dual chitinase/transglycosylase that plays a role in cell wall architecture. Chitinase and transglycosylase activities are coupled. Required for the polysaccharide cross-linking at the septa and the cell wall. More specifically, transfers chitin to 1,6-beta-glucan in the cell wall. Plays an important role in fungal pathogenesis via its functions in cell wall assembly and regeneration, filamentation, and adherence to host cells. The protein is Crh-like protein CRH12 (CRH12) of Candida albicans (strain SC5314 / ATCC MYA-2876) (Yeast).